The sequence spans 385 residues: DNA replication and repair protein RecF (385 aa).

30–37 (GPNGNGKT) provides a ligand contact to ATP.

The protein belongs to the RecF family.

It is found in the cytoplasm. Functionally, the RecF protein is involved in DNA metabolism; it is required for DNA replication and normal SOS inducibility. RecF binds preferentially to single-stranded, linear DNA. It also seems to bind ATP. The polypeptide is DNA replication and repair protein RecF (Mycobacterium leprae (strain Br4923)).